The sequence spans 292 residues: 4'-phosphopantetheinyl transferase 1 (292 aa).

This sequence belongs to the P-Pant transferase superfamily.

The enzyme catalyses apo-[ACP] + CoA = holo-[ACP] + adenosine 3',5'-bisphosphate + H(+). Its function is as follows. Transfers the 4'-phosphopantetheine moiety from coenzyme A to a Ser of an acyl-carrier-protein. The enzyme is able to transfer the cofactor to a broad range of enzymes with acyl- or peptidyl-carrier protein domains. Required for primary biological processes such as growth and asexual/sexual development, and activates target enzymes involved in the synthesis of metabolites such as fatty acids, nonribosomal peptides and polyketides such as the gamma-pyrones fusapyrone (FPY) and deoxyfusapyrone (dFPY). The polypeptide is 4'-phosphopantetheinyl transferase 1 (Fusarium mangiferae (Mango malformation disease fungus)).